The sequence spans 999 residues: Tyrosine-protein kinase Mer (999 aa).

The first 20 residues, 1 to 20 (MGPAPLPLLLGLFLPALWRR), serve as a signal peptide directing secretion. Topologically, residues 21–505 (AITEAREEAK…PGNADPVLII (485 aa)) are extracellular. 2 Ig-like C2-type domains span residues 81-186 (PQVT…EIVS) and 197-273 (PHFT…LTVS). N-linked (GlcNAc...) asparagine glycans are attached at residues Asn-114, Asn-170, Asn-207, Asn-215, Asn-234, Asn-294, Asn-316, Asn-329, Asn-336, Asn-354, Asn-389, Asn-395, Asn-442, and Asn-454. A disulfide bridge connects residues Cys-115 and Cys-175. Cys-218 and Cys-262 are disulfide-bonded. Fibronectin type-III domains lie at 286 to 381 (PPTE…TTEG) and 386 to 484 (APLN…PAHG). The chain crosses the membrane as a helical span at residues 506–526 (FGCFCGFILIGLILYISLAIR). Over 527 to 999 (KRVQETKFGN…DSSEGSEVLM (473 aa)) the chain is Cytoplasmic. Ser-543 is modified (phosphoserine). A Protein kinase domain is found at 587-858 (LILGKILGEG…VLRLQLEKLL (272 aa)). Residues 593–601 (LGEGEFGSV) and Lys-615 contribute to the ATP site. Asp-723 functions as the Proton acceptor in the catalytic mechanism. 4 positions are modified to phosphotyrosine; by autocatalysis: Tyr-749, Tyr-753, Tyr-754, and Tyr-872. A Phosphoserine modification is found at Ser-935.

Belongs to the protein kinase superfamily. Tyr protein kinase family. AXL/UFO subfamily. Interacts (upon activation) with TNK2; stimulates TNK2 autophosphorylation. Interacts (via N-terminus) with extracellular ligands LGALS3, TUB, TULP1 and GAS6. Interacts with VAV1 in a phosphotyrosine-independent manner. Interacts with TIMD4; this interaction enhances TIMD4-mediated efferocytosis. Autophosphorylated on Tyr-749, Tyr-753 and Tyr-754 in the activation loop allowing full activity. Autophosphorylated on Tyr-872 leading to recruitment of downstream partners of the signaling cascade such as PLCG2. In terms of tissue distribution, not expressed in normal B- and T-lymphocytes but is expressed in numerous neoplastic B- and T-cell lines. Highly expressed in testis, ovary, prostate, lung, and kidney, with lower expression in spleen, small intestine, colon, and liver.

The protein resides in the cell membrane. It carries out the reaction L-tyrosyl-[protein] + ATP = O-phospho-L-tyrosyl-[protein] + ADP + H(+). Its function is as follows. Receptor tyrosine kinase that transduces signals from the extracellular matrix into the cytoplasm by binding to several ligands including LGALS3, TUB, TULP1 or GAS6. Regulates many physiological processes including cell survival, migration, differentiation, and phagocytosis of apoptotic cells (efferocytosis). Ligand binding at the cell surface induces autophosphorylation of MERTK on its intracellular domain that provides docking sites for downstream signaling molecules. Following activation by ligand, interacts with GRB2 or PLCG2 and induces phosphorylation of MAPK1, MAPK2, FAK/PTK2 or RAC1. MERTK signaling plays a role in various processes such as macrophage clearance of apoptotic cells, platelet aggregation, cytoskeleton reorganization and engulfment. Functions in the retinal pigment epithelium (RPE) as a regulator of rod outer segments fragments phagocytosis. Also plays an important role in inhibition of Toll-like receptors (TLRs)-mediated innate immune response by activating STAT1, which selectively induces production of suppressors of cytokine signaling SOCS1 and SOCS3. This Homo sapiens (Human) protein is Tyrosine-protein kinase Mer (MERTK).